The sequence spans 496 residues: Apolipoprotein N-acyltransferase (496 aa).

Helical transmembrane passes span 6–26 (IICL…FFIP), 50–70 (FGYL…SIGV), 77–97 (FWWA…FFIS), 114–134 (LIFC…LTGL), 148–168 (ILIQ…VIYI), and 183–203 (LKIL…YGAV). The 245-residue stretch at 220–464 (VQPSIPQTAK…QGLIPQKLTT (245 aa)) folds into the CN hydrolase domain. Glu-259 functions as the Proton acceptor in the catalytic mechanism. Lys-322 is a catalytic residue. The active-site Nucleophile is Cys-372. A helical membrane pass occupies residues 474 to 494 (FAMLLSIVFIILIHYLLSLIF).

This sequence belongs to the CN hydrolase family. Apolipoprotein N-acyltransferase subfamily.

The protein resides in the cell inner membrane. The enzyme catalyses N-terminal S-1,2-diacyl-sn-glyceryl-L-cysteinyl-[lipoprotein] + a glycerophospholipid = N-acyl-S-1,2-diacyl-sn-glyceryl-L-cysteinyl-[lipoprotein] + a 2-acyl-sn-glycero-3-phospholipid + H(+). It functions in the pathway protein modification; lipoprotein biosynthesis (N-acyl transfer). Catalyzes the phospholipid dependent N-acylation of the N-terminal cysteine of apolipoprotein, the last step in lipoprotein maturation. The sequence is that of Apolipoprotein N-acyltransferase from Rickettsia prowazekii (strain Madrid E).